Consider the following 609-residue polypeptide: Adenine deaminase (609 aa).

It belongs to the metallo-dependent hydrolases superfamily. Adenine deaminase family. The cofactor is Mn(2+).

It catalyses the reaction adenine + H2O + H(+) = hypoxanthine + NH4(+). The protein is Adenine deaminase of Cenarchaeum symbiosum (strain A).